The sequence spans 388 residues: 1-deoxy-D-xylulose 5-phosphate reductoisomerase (388 aa).

Residues threonine 13, glycine 14, serine 15, isoleucine 16, arginine 40, asparagine 41, and asparagine 124 each coordinate NADPH. Lysine 125 is a binding site for 1-deoxy-D-xylulose 5-phosphate. Position 126 (glutamate 126) interacts with NADPH. Position 150 (aspartate 150) interacts with Mn(2+). Positions 151, 152, 176, and 199 each coordinate 1-deoxy-D-xylulose 5-phosphate. Mn(2+) is bound at residue glutamate 152. Glycine 205 provides a ligand contact to NADPH. Serine 212, asparagine 217, lysine 218, and glutamate 221 together coordinate 1-deoxy-D-xylulose 5-phosphate. Glutamate 221 provides a ligand contact to Mn(2+).

This sequence belongs to the DXR family. As to quaternary structure, homodimer. The cofactor is Mg(2+). Mn(2+) serves as cofactor. Co(2+) is required as a cofactor.

The catalysed reaction is 2-C-methyl-D-erythritol 4-phosphate + NADP(+) = 1-deoxy-D-xylulose 5-phosphate + NADPH + H(+). The protein operates within isoprenoid biosynthesis; isopentenyl diphosphate biosynthesis via DXP pathway; isopentenyl diphosphate from 1-deoxy-D-xylulose 5-phosphate: step 1/6. Competitively inhibited by the antibiotic fosmidomycin. Its function is as follows. Catalyzes the NADPH-dependent rearrangement and reduction of 1-deoxy-D-xylulose-5-phosphate (DXP) to 2-C-methyl-D-erythritol 4-phosphate (MEP). Cannot use NADH instead of NADPH as the reducing agent. In Zymomonas mobilis subsp. mobilis (strain ATCC 31821 / ZM4 / CP4), this protein is 1-deoxy-D-xylulose 5-phosphate reductoisomerase.